A 141-amino-acid chain; its full sequence is Large ribosomal subunit protein uL23A (141 aa).

Ser-68 and Ser-70 each carry phosphoserine.

Belongs to the universal ribosomal protein uL23 family. As to quaternary structure, component of the large ribosomal subunit (LSU). Mature yeast ribosomes consist of a small (40S) and a large (60S) subunit. The 40S small subunit contains 1 molecule of ribosomal RNA (18S rRNA) and at least 33 different proteins. The large 60S subunit contains 3 rRNA molecules (25S, 5.8S and 5S rRNA) and at least 46 different proteins. uL23 is associated with the polypeptide exit tunnel.

It localises to the cytoplasm. Functionally, this protein binds to a specific region on the 26S rRNA. Its function is as follows. Component of the ribosome, a large ribonucleoprotein complex responsible for the synthesis of proteins in the cell. The small ribosomal subunit (SSU) binds messenger RNAs (mRNAs) and translates the encoded message by selecting cognate aminoacyl-transfer RNA (tRNA) molecules. The large subunit (LSU) contains the ribosomal catalytic site termed the peptidyl transferase center (PTC), which catalyzes the formation of peptide bonds, thereby polymerizing the amino acids delivered by tRNAs into a polypeptide chain. The nascent polypeptides leave the ribosome through a tunnel in the LSU and interact with protein factors that function in enzymatic processing, targeting, and the membrane insertion of nascent chains at the exit of the ribosomal tunnel. uL23 is a major component of the universal docking site for these factors at the polypeptide exit tunnel. The sequence is that of Large ribosomal subunit protein uL23A (rpl2501) from Schizosaccharomyces pombe (strain 972 / ATCC 24843) (Fission yeast).